The primary structure comprises 628 residues: MSDWSLDQARKTYSIPHWADGYFDVNDAGHVVVRPTADGPAVSLPEVVDAARAAGAKLPLLVRFPDILGQRLGKLQAAFAQAQADWDYAGGYTAVYPIKVNQHRGVAGTLASHHGEGFGLEAGSKPELMAVLALSRPGGLIVCNGYKDREYIRLALIGRKLGLQTFIVIEKPSELNLVLEEARALDVKPGLGVRMRLASLGAGKWQNSGGDKAKFGLSPRQVLDLWKSLRDTEYADSLNLLHFHMGSQISNVRDIANGMREATRYFVELSRLGAKISHVDVGGGLGIDYEGTRSRSYCSINYGLHSYASNIVQPLASACEEHGLPPPRIVTECGRAMTAHHAVLIANVSEVEQAPEGRVPDAHDDEPAAIRHLREIHDELDVRPAVELFQEAQHFHAEGLSAYALGQIDLTHRARIDDLFYAIAHGVRARLSFDEKSHRPVLDELNERLVDKYFVNFSVFESIPDVWAIDQVFPIVPIERLNEAPQRRGIIADMTCDSDGMVKTYVENESLDSSLPLHGLNPGESYRIGFFLVGAYQEILGDIHNLFGDTDAVEVAVDGTGYRIAQQRRGDTTDVMLDYVGYQLDTLRATYAERIAAAQLPPERAQELHDALEAGLTGYTYLSDEPLG.

Residue K99 is modified to N6-(pyridoxal phosphate)lysine. 279 to 289 contributes to the substrate binding site; it reads VDVGGGLGIDY.

This sequence belongs to the Orn/Lys/Arg decarboxylase class-II family. SpeA subfamily. Mg(2+) serves as cofactor. It depends on pyridoxal 5'-phosphate as a cofactor.

The enzyme catalyses L-arginine + H(+) = agmatine + CO2. Its function is as follows. Catalyzes the biosynthesis of agmatine from arginine. The chain is Biosynthetic arginine decarboxylase from Xanthomonas campestris pv. campestris (strain ATCC 33913 / DSM 3586 / NCPPB 528 / LMG 568 / P 25).